The following is a 145-amino-acid chain: Aminoglycoside N(6')-acetyltransferase type 1 (145 aa).

The region spanning 1–145 is the N-acetyltransferase domain; that stretch reads MDIRQMNKTH…ERVIFYRKRC (145 aa). Substrate is bound by residues Trp22, His25, Tyr66, and Glu79. Acetyl-CoA-binding positions include 81–83 and 89–94; these read IFV and QRGVAK. Asp115 serves as a coordination point for substrate. An acetyl-CoA-binding site is contributed by Asn120. Glu136 contacts substrate.

As to quaternary structure, homodimer.

It carries out the reaction kanamycin B + acetyl-CoA = N(6')-acetylkanamycin B + CoA + H(+). Catalyzes the transfer of an acetyl group from acetyl-CoA to the 6'-amino group of aminoglycoside molecules conferring resistance to antibiotics containing the purpurosamine ring including amikacin, tobramycin, dibekacin and ribostamycin. Able to acetylate eukaryotic histone proteins. The sequence is that of Aminoglycoside N(6')-acetyltransferase type 1 from Salmonella enteritidis.